The primary structure comprises 61 residues: Small ribosomal subunit protein uS14B (61 aa).

Residues Cys-24, Cys-27, Cys-40, and Cys-43 each coordinate Zn(2+).

This sequence belongs to the universal ribosomal protein uS14 family. Zinc-binding uS14 subfamily. Part of the 30S ribosomal subunit. Contacts proteins S3 and S10. Zn(2+) is required as a cofactor.

Binds 16S rRNA, required for the assembly of 30S particles and may also be responsible for determining the conformation of the 16S rRNA at the A site. This Lactiplantibacillus plantarum (strain ATCC BAA-793 / NCIMB 8826 / WCFS1) (Lactobacillus plantarum) protein is Small ribosomal subunit protein uS14B.